The sequence spans 339 residues: D-erythrose-4-phosphate dehydrogenase (339 aa).

Residues 12–13 and Arg-81 contribute to the NAD(+) site; that span reads RI. Substrate-binding positions include 154-156, Arg-200, 213-214, and Arg-236; these read SCT and TK. The active-site Nucleophile is Cys-155. Asn-318 serves as a coordination point for NAD(+).

This sequence belongs to the glyceraldehyde-3-phosphate dehydrogenase family. Epd subfamily. As to quaternary structure, homotetramer.

It is found in the cytoplasm. The catalysed reaction is D-erythrose 4-phosphate + NAD(+) + H2O = 4-phospho-D-erythronate + NADH + 2 H(+). It participates in cofactor biosynthesis; pyridoxine 5'-phosphate biosynthesis; pyridoxine 5'-phosphate from D-erythrose 4-phosphate: step 1/5. In terms of biological role, catalyzes the NAD-dependent conversion of D-erythrose 4-phosphate to 4-phosphoerythronate. The chain is D-erythrose-4-phosphate dehydrogenase from Escherichia coli (strain UTI89 / UPEC).